The chain runs to 505 residues: Mannosyl-oligosaccharide alpha-1,2-mannosidase 1B (505 aa).

An N-terminal signal peptide occupies residues 1–16 (MRTLLALAALAGFAAA). N88 and N174 each carry an N-linked (GlcNAc...) asparagine glycan. An intrachain disulfide couples C325 to C354. N359 carries an N-linked (GlcNAc...) asparagine glycan. E368 functions as the Proton donor in the catalytic mechanism. Residue T494 coordinates Ca(2+).

The protein belongs to the glycosyl hydrolase 47 family. Monomer. It depends on Ca(2+) as a cofactor. Mg(2+) is required as a cofactor.

Its subcellular location is the cytoplasmic vesicle lumen. The catalysed reaction is N(4)-(alpha-D-Man-(1-&gt;2)-alpha-D-Man-(1-&gt;2)-alpha-D-Man-(1-&gt;3)-[alpha-D-Man-(1-&gt;2)-alpha-D-Man-(1-&gt;3)-[alpha-D-Man-(1-&gt;2)-alpha-D-Man-(1-&gt;6)]-alpha-D-Man-(1-&gt;6)]-beta-D-Man-(1-&gt;4)-beta-D-GlcNAc-(1-&gt;4)-beta-D-GlcNAc)-L-asparaginyl-[protein] (N-glucan mannose isomer 9A1,2,3B1,2,3) + 4 H2O = N(4)-(alpha-D-Man-(1-&gt;3)-[alpha-D-Man-(1-&gt;3)-[alpha-D-Man-(1-&gt;6)]-alpha-D-Man-(1-&gt;6)]-beta-D-Man-(1-&gt;4)-beta-D-GlcNAc-(1-&gt;4)-beta-D-GlcNAc)-L-asparaginyl-[protein] (N-glucan mannose isomer 5A1,2) + 4 beta-D-mannose. It carries out the reaction N(4)-(alpha-D-Man-(1-&gt;2)-alpha-D-Man-(1-&gt;2)-alpha-D-Man-(1-&gt;3)-[alpha-D-Man-(1-&gt;3)-[alpha-D-Man-(1-&gt;2)-alpha-D-Man-(1-&gt;6)]-alpha-D-Man-(1-&gt;6)]-beta-D-Man-(1-&gt;4)-beta-D-GlcNAc-(1-&gt;4)-beta-D-GlcNAc)-L-asparaginyl-[protein] (N-glucan mannose isomer 8A1,2,3B1,3) + 3 H2O = N(4)-(alpha-D-Man-(1-&gt;3)-[alpha-D-Man-(1-&gt;3)-[alpha-D-Man-(1-&gt;6)]-alpha-D-Man-(1-&gt;6)]-beta-D-Man-(1-&gt;4)-beta-D-GlcNAc-(1-&gt;4)-beta-D-GlcNAc)-L-asparaginyl-[protein] (N-glucan mannose isomer 5A1,2) + 3 beta-D-mannose. It functions in the pathway protein modification; protein glycosylation. Its function is as follows. Involved in the maturation of Asn-linked oligosaccharides. Progressively trims alpha-1,2-linked mannose residues from Man(9)GlcNAc(2) to produce Man(5)GlcNAc(2). The chain is Mannosyl-oligosaccharide alpha-1,2-mannosidase 1B (mns1B) from Emericella nidulans (strain FGSC A4 / ATCC 38163 / CBS 112.46 / NRRL 194 / M139) (Aspergillus nidulans).